We begin with the raw amino-acid sequence, 361 residues long: MKDSVIRKLEGLLERNEEVLALLSDAGVIADQERFRALSKEYSQLEDVVSTFKSFQQAEEDLESAKEMMEEDDPELKEMAQEEYKVAKSAIAALEDELQILLLPKDPNDDNNCFIEIRAGAGGDEAAIFAGDLFRMYSRYAESKRWQIEVMNTNEGEHGGFKEVIAKISGEGVYGKLKFESGGHRVQRVPETESQGRVHTSACTVIVLPEVPEAEAIEINKADLKVDTFRASGAGGQHVNKTDSAIRITHIPTGIVVECQDQRSQHKNRAQAMSVLAARIQAVEDEKRRSAEESTRRNLVSSGDRSERIRTYNFPQGRVSEHRINLTLYRLGEFMEGDIDCVVEPLIQENQADMLAALGEG.

Gln237 bears the N5-methylglutamine mark. Over residues 286-296 (EKRRSAEESTR) the composition is skewed to basic and acidic residues. Residues 286-305 (EKRRSAEESTRRNLVSSGDR) form a disordered region.

It belongs to the prokaryotic/mitochondrial release factor family. Methylated by PrmC. Methylation increases the termination efficiency of RF1.

The protein resides in the cytoplasm. Its function is as follows. Peptide chain release factor 1 directs the termination of translation in response to the peptide chain termination codons UAG and UAA. The chain is Peptide chain release factor 1 from Shewanella pealeana (strain ATCC 700345 / ANG-SQ1).